The chain runs to 33 residues: MNLEVIAQPIVLGLIVASGPLVIVSLAARRGNL.

The helical transmembrane segment at V5–S25 threads the bilayer.

The protein belongs to the Psb30/Ycf12 family. In terms of assembly, PSII is composed of 1 copy each of membrane proteins PsbA, PsbB, PsbC, PsbD, PsbE, PsbF, PsbH, PsbI, PsbJ, PsbK, PsbL, PsbM, PsbT, PsbX, PsbY, PsbZ, Psb30/Ycf12, peripheral proteins of the oxygen-evolving complex and a large number of cofactors. It forms dimeric complexes.

Its subcellular location is the plastid membrane. Functionally, a core subunit of photosystem II (PSII), probably helps stabilize the reaction center. This is Photosystem II reaction center protein Psb30 from Aneura mirabilis (Parasitic liverwort).